Consider the following 87-residue polypeptide: MYVIELTLRMSPIPVSVQRKEPSDAEALYQEIRQAIDHGQPRLLDLTCEKVEGKKAALLISEVLAVQLYEKASAAGGSKRPGFSLES.

The protein belongs to the UPF0367 family.

This chain is UPF0367 protein Syncc9902_0316, found in Synechococcus sp. (strain CC9902).